Here is a 260-residue protein sequence, read N- to C-terminus: NifU-like protein C1709.19c (260 aa).

The segment at 161–231 is nifU; the sequence is IKELIETSIR…IPEVENVVQV (71 aa).

This sequence belongs to the NifU family.

The polypeptide is NifU-like protein C1709.19c (Schizosaccharomyces pombe (strain 972 / ATCC 24843) (Fission yeast)).